Reading from the N-terminus, the 57-residue chain is Large ribosomal subunit protein bL33 (57 aa).

It belongs to the bacterial ribosomal protein bL33 family.

The polypeptide is Large ribosomal subunit protein bL33 (Shewanella sp. (strain MR-4)).